A 712-amino-acid chain; its full sequence is Eukaryotic translation initiation factor 3 subunit B (712 aa).

The tract at residues 1-98 (MSLTEAEYHE…LFVQFETSEM (98 aa)) is sufficient for interaction with HCR1 and TIF32. A sufficient for interaction with PIC8 region spans residues 1–224 (MSLTEAEYHE…GVQSWGGADF (224 aa)). The RRM domain maps to 37-124 (NYVVVDGAPI…HRLLVNRLSD (88 aa)). WD repeat units follow at residues 191–229 (RKFFTSKYAKFSPKGTYLFSIHPQGVQSWGGADFSSIDK), 230–293 (FMHN…RTFA), 301–339 (QKEMPWPLVKWSHDDKYCARQGPGALAVYETPSFQLLDK), 342–384 (IKID…QTAR), 452–493 (ELKE…DFYA), 513–555 (ITDK…SNKN), and 566–604 (DKFSGMTNISWDPSGRFVATWSSSWLHTIENGYKLYEFT).

Belongs to the eIF-3 subunit B family. As to quaternary structure, component of the eukaryotic translation initiation factor 3 (eIF-3) complex.

It localises to the cytoplasm. In terms of biological role, RNA-binding component of the eukaryotic translation initiation factor 3 (eIF-3) complex, which is involved in protein synthesis of a specialized repertoire of mRNAs and, together with other initiation factors, stimulates binding of mRNA and methionyl-tRNAi to the 40S ribosome. The eIF-3 complex specifically targets and initiates translation of a subset of mRNAs involved in cell proliferation. This Scheffersomyces stipitis (strain ATCC 58785 / CBS 6054 / NBRC 10063 / NRRL Y-11545) (Yeast) protein is Eukaryotic translation initiation factor 3 subunit B.